Consider the following 1012-residue polypeptide: Tolloid-like protein 2 (1012 aa).

An N-terminal signal peptide occupies residues 1-21 (MPLATTLGTLVLLLLLPLPRG). Positions 22 to 146 (AEVTGDHSNV…AKTFSARVRR (125 aa)) are excised as a propeptide. Residues 83-135 (KPSIDKPGHDTGGLEETSARWPNDTASNASIQAPRKDGKDATTFLPNPGTSNT) form a disordered region. Polar residues predominate over residues 126–135 (FLPNPGTSNT). Positions 146-346 (RATTSRTERI…AQARKLYKCP (201 aa)) constitute a Peptidase M12A domain. Asn-168 is a glycosylation site (N-linked (GlcNAc...) asparagine). Disulfide bonds link Cys-189-Cys-345, Cys-209-Cys-231, Cys-211-Cys-212, and Cys-348-Cys-374. A Zn(2+)-binding site is contributed by His-239. Glu-240 is a catalytic residue. Residues His-243 and His-249 each coordinate Zn(2+). 2 consecutive CUB domains span residues 348–460 (CGET…YEAM) and 461–573 (CGGD…FFKE). N-linked (GlcNAc...) asparagine glycosylation is found at Asn-358 and Asn-389. 12 disulfides stabilise this stretch: Cys-401-Cys-423, Cys-461-Cys-487, Cys-514-Cys-536, Cys-577-Cys-589, Cys-585-Cys-598, Cys-600-Cys-613, Cys-617-Cys-643, Cys-670-Cys-692, Cys-733-Cys-744, Cys-740-Cys-753, Cys-755-Cys-768, and Cys-773-Cys-799. One can recognise an EGF-like 1; calcium-binding domain in the interval 573–614 (EVDECSWPDHGGCEQRCVNTLGSYTCACDPGYELAADKKTCE). The 113-residue stretch at 617–729 (CGGFITKLNG…RGFRAHFFSD (113 aa)) folds into the CUB 3 domain. Residue Asn-625 is glycosylated (N-linked (GlcNAc...) asparagine). The 41-residue stretch at 729 to 769 (DKDECAKDNGGCQQECVNTFGSYLCRCRNGYRLHENGHDCK) folds into the EGF-like 2; calcium-binding domain. 2 consecutive CUB domains span residues 773–885 (CAYK…HSTE) and 886–1002 (CGGR…YTST). Asn-802 is a glycosylation site (N-linked (GlcNAc...) asparagine). 3 disulfides stabilise this stretch: Cys-826–Cys-848, Cys-886–Cys-916, and Cys-943–Cys-965. Arg-960 and Arg-963 each carry omega-N-methylarginine.

It depends on Zn(2+) as a cofactor.

The protein resides in the secreted. Protease which specifically processes pro-lysyl oxidase. Required for the embryonic development. Predominant protease, which in the development, influences dorsal-ventral patterning and skeletogenesis. This chain is Tolloid-like protein 2 (Tll2), found in Mus musculus (Mouse).